A 163-amino-acid polypeptide reads, in one-letter code: Small ribosomal subunit protein uS7 (163 aa).

Belongs to the universal ribosomal protein uS7 family. In terms of assembly, part of the 30S ribosomal subunit. Contacts proteins S9 and S11.

Its function is as follows. One of the primary rRNA binding proteins, it binds directly to 16S rRNA where it nucleates assembly of the head domain of the 30S subunit. Is located at the subunit interface close to the decoding center, probably blocks exit of the E-site tRNA. The sequence is that of Small ribosomal subunit protein uS7 from Rickettsia bellii (strain RML369-C).